Here is a 357-residue protein sequence, read N- to C-terminus: MKVNKEEYRGDYGEISLQPESLDDLWHLKYIVEPGDTVFAMTFRAVDSVSDKIRPDKVEKKLVRLGIKVESTEFHKFSNRLRIKGTIISDLDAGAYHTLNIEPYSELSIAKHWKSDQIERIRDAVEASKRPEVEIVTIEEGEAAIGYLRQYGIEEVSRIRQASSGKREGADARSVDGRGEFFGEVAAQLKYADKVQTIVVAGPGFIKDDFVKFLRVNHPAVAQKVIVEDTSSIGSSGFQEVLRRGAIQRVAEENRITREAQLIEALLSEIAKDGKATYGFAETKRAVDYGAVETLLIADETLRGLREKGARDIESLMRDVEHARGKVVVFSTEFEPGQRLEKLGGVASILRFPIGGD.

It belongs to the eukaryotic release factor 1 family. Pelota subfamily. In terms of assembly, monomer. It depends on a divalent metal cation as a cofactor.

It localises to the cytoplasm. Its function is as follows. May function in recognizing stalled ribosomes, interact with stem-loop structures in stalled mRNA molecules, and effect endonucleolytic cleavage of the mRNA. May play a role in the release non-functional ribosomes and degradation of damaged mRNAs. Has endoribonuclease activity. This is Protein pelota homolog from Methanocella arvoryzae (strain DSM 22066 / NBRC 105507 / MRE50).